Here is an 88-residue protein sequence, read N- to C-terminus: Small ribosomal subunit protein uS17 (88 aa).

Belongs to the universal ribosomal protein uS17 family. In terms of assembly, part of the 30S ribosomal subunit.

Functionally, one of the primary rRNA binding proteins, it binds specifically to the 5'-end of 16S ribosomal RNA. The protein is Small ribosomal subunit protein uS17 of Oleidesulfovibrio alaskensis (strain ATCC BAA-1058 / DSM 17464 / G20) (Desulfovibrio alaskensis).